The sequence spans 702 residues: Polyribonucleotide nucleotidyltransferase (702 aa).

Mg(2+) contacts are provided by aspartate 485 and aspartate 491. One can recognise a KH domain in the interval 552-611; the sequence is PKTSTLQIDPEKIRDVIGAGGKVINKIIADTGVKIDIKEDGLVYVSSAESEGVKEAVKII. The S1 motif domain occupies 621 to 689; that stretch reads GEIYLGKVTK…SQGRINLSRK (69 aa).

Belongs to the polyribonucleotide nucleotidyltransferase family. The cofactor is Mg(2+).

Its subcellular location is the cytoplasm. It catalyses the reaction RNA(n+1) + phosphate = RNA(n) + a ribonucleoside 5'-diphosphate. In terms of biological role, involved in mRNA degradation. Catalyzes the phosphorolysis of single-stranded polyribonucleotides processively in the 3'- to 5'-direction. The polypeptide is Polyribonucleotide nucleotidyltransferase (Clostridium perfringens (strain SM101 / Type A)).